Consider the following 237-residue polypeptide: Mitochondrial inner membrane protease atp23 (237 aa).

The segment covering 1 to 13 (MSDSQPCSTPSTR) has biased composition (polar residues). Residues 1–23 (MSDSQPCSTPSTRGKSDSGYIPG) are disordered. An a divalent metal cation-binding site is contributed by His136. The active site involves Glu137. His140 lines the a divalent metal cation pocket.

The protein belongs to the peptidase M76 family.

The protein localises to the mitochondrion inner membrane. Has a dual role in the assembly of mitochondrial ATPase. Acts as a protease that removes N-terminal residues of mitochondrial ATPase CF(0) subunit 6 at the intermembrane space side. Also involved in the correct assembly of the membrane-embedded ATPase CF(0) particle, probably mediating association of subunit 6 with the subunit 9 ring. The chain is Mitochondrial inner membrane protease atp23 (atp23) from Aspergillus fumigatus (strain ATCC MYA-4609 / CBS 101355 / FGSC A1100 / Af293) (Neosartorya fumigata).